Reading from the N-terminus, the 152-residue chain is Small ribosomal subunit protein bS6 (152 aa).

A disordered region spans residues 96–152 (HEEGPSAMLQKRDRDDRGERGDRGDRGDRGDRGFGGREDRPRRPRPTEESHGGEEEV).

This sequence belongs to the bacterial ribosomal protein bS6 family.

Functionally, binds together with bS18 to 16S ribosomal RNA. This is Small ribosomal subunit protein bS6 from Xanthobacter autotrophicus (strain ATCC BAA-1158 / Py2).